The sequence spans 683 residues: Protein distal antenna (683 aa).

Residues 7 to 58 (TKGKRPLRSLTPRDKIHAIQRIHDGESKASVARDIGVPESTLRGWCKNEDKL) form the HTH psq-type domain. Residues 34–54 (KASVARDIGVPESTLRGWCKN) constitute a DNA-binding region (H-T-H motif). 5 disordered regions span residues 220–255 (TANN…SVKN), 336–369 (SPPI…TPSG), 443–525 (SETP…SDCI), 572–597 (NQHS…DEEE), and 652–683 (EPQV…RRRK). Over residues 227-242 (SKPSVQPPLQVQSPRS) the composition is skewed to low complexity. Polar residues-rich tracts occupy residues 338–352 (PIRS…QHAQ) and 445–460 (TPSV…NQLD). The segment covering 462-478 (IEGDEVTDPDLDAEIEG) has biased composition (acidic residues). A compositionally biased stretch (low complexity) spans 575–591 (SNNNDISASNNNNNNSN).

In terms of assembly, homomers. Interacts with itself, danr, ey and dac to form a complex (or complexes) containing the RD factors.

It localises to the nucleus. In terms of biological role, probable transcription factor with a role in the retinal determination (RD) network. Regulates ato expression and is required for normal R8 induction and differentiation. Danr appears to repress Dan expression, but Dan is required for Danr expression anterior to the morphogenetic furrow (MF). Dan and Danr lie downstream of so and require dac function for highest levels of expression. Contributes to differentiation of antenna-specific characteristics; effector gene that acts downstream of homothorax (hth), Distal-less (Dll), cut (ct) and spineless (ss) genes to control differentiation of distal antennal structures. The protein is Protein distal antenna of Drosophila pseudoobscura pseudoobscura (Fruit fly).